The primary structure comprises 430 residues: UDP-N-acetylglucosamine 1-carboxyvinyltransferase 1 (430 aa).

Position 22–23 (22–23) interacts with phosphoenolpyruvate; the sequence is KN. Arginine 93 provides a ligand contact to UDP-N-acetyl-alpha-D-glucosamine. Cysteine 117 functions as the Proton donor in the catalytic mechanism. 2-(S-cysteinyl)pyruvic acid O-phosphothioketal is present on cysteine 117. Residues 122 to 126, aspartate 305, and valine 327 contribute to the UDP-N-acetyl-alpha-D-glucosamine site; that span reads RPVDL.

It belongs to the EPSP synthase family. MurA subfamily.

The protein resides in the cytoplasm. It carries out the reaction phosphoenolpyruvate + UDP-N-acetyl-alpha-D-glucosamine = UDP-N-acetyl-3-O-(1-carboxyvinyl)-alpha-D-glucosamine + phosphate. The protein operates within cell wall biogenesis; peptidoglycan biosynthesis. Functionally, cell wall formation. Adds enolpyruvyl to UDP-N-acetylglucosamine. The sequence is that of UDP-N-acetylglucosamine 1-carboxyvinyltransferase 1 from Listeria innocua serovar 6a (strain ATCC BAA-680 / CLIP 11262).